The following is a 335-amino-acid chain: Transcriptional coactivator YAP1-B (335 aa).

A compositionally biased stretch (low complexity) spans 1 to 13 (MEPGSQQQPSAPG). Positions 1–21 (MEPGSQQQPSAPGQQPPPVGH) are disordered. Position 30 is a phosphoserine; by LATS1 and LATS2 (serine 30). The segment covering 114-124 (MNQQRLSQSAP) has biased composition (polar residues). The tract at residues 114–146 (MNQQRLSQSAPVKSPPALQPQSPPSGVLGSGGN) is disordered. The segment covering 126 to 136 (KSPPALQPQSP) has biased composition (pro residues). The segment at 137–335 (PSGVLGSGGN…LDKESFLTWL (199 aa)) is transactivation domain. Positions 145–173 (GNQQMRLQQLQMEKERLRLKHQELLRQVR) form a coiled coil.

This sequence belongs to the YAP1 family. In terms of processing, phosphorylated by lats1 and lats2; leading to cytoplasmic translocation and inactivation.

The protein resides in the cytoplasm. It is found in the nucleus. It localises to the cell junction. Its subcellular location is the tight junction. The protein localises to the cell membrane. Functionally, transcriptional regulator which can act both as a coactivator and a corepressor and is the critical downstream regulatory target in the Hippo signaling pathway that plays a pivotal role in organ size control and tumor suppression by restricting proliferation and promoting apoptosis. Plays a key role in tissue tension and 3D tissue shape by regulating cortical actomyosin network formation. The protein is Transcriptional coactivator YAP1-B of Xenopus laevis (African clawed frog).